Here is a 735-residue protein sequence, read N- to C-terminus: Protein STRUBBELIG-RECEPTOR FAMILY 2 (735 aa).

The N-terminal stretch at 1–23 is a signal peptide; sequence MKTKQQLRFLATILLTTILFVLA. Residues 24 to 297 are Extracellular-facing; that stretch reads KTDTDPLEVL…KKKKKGIGAG (274 aa). 8 LRR repeats span residues 78–94, 96–119, 120–140, 142–163, 165–187, 189–211, 212–232, and 233–253; these read LREL…LQHL, NLKI…PPNA, THIN…LPLM, SLQS…VFSG, QIKE…FGTL, NLTS…ADLP, LADL…HFQS, and IPHL…KPWK. N-linked (GlcNAc...) asparagine glycosylation is found at asparagine 118, asparagine 128, asparagine 147, asparagine 175, and asparagine 189. The N-linked (GlcNAc...) asparagine glycan is linked to asparagine 264. The helical transmembrane segment at 298 to 318 threads the bilayer; sequence STFLLVGGLALLGTFFALFAV. The Cytoplasmic portion of the chain corresponds to 319–735; the sequence is RMNHRRAQNL…SSPTFSYLSS (417 aa). Positions 358 to 378 are disordered; that stretch reads PQIKRFQPPPAPQLRHLPSPP. The Protein kinase domain maps to 415–695; that stretch reads FSEENLLGEG…EIVEALTALI (281 aa).

The protein belongs to the protein kinase superfamily. Ser/Thr protein kinase family. As to expression, expressed in seedlings, roots, stems, leaves, flowers and siliques.

It localises to the membrane. This chain is Protein STRUBBELIG-RECEPTOR FAMILY 2 (SRF2), found in Arabidopsis thaliana (Mouse-ear cress).